The primary structure comprises 430 residues: Alpha-(1-&gt;3)-arabinofuranosyltransferase (430 aa).

The next 10 helical transmembrane spans lie at 26-46 (APSTATVLRSVLWPIAILSVI), 114-134 (WYISFNVLAFLIAAYLMLRIF), 136-156 (YTLSSVAAPALVLAMFCTESV), 160-180 (LVFTNINGCMLLGAVLFFRWL), 194-214 (AIGLTLVVKPSLAPLLLLPVL), 218-238 (FYTLITAFGVPLVFNIAAWPL), 276-296 (WLILLLRVVFLLLAVGSLWLL), 307-327 (FWLLTSSGVLLTASFLLLSLG), 352-372 (WPAWLAIYGFMTMDRWLLGHW), and 381-401 (YMKITYGWSLMLVVVFCVLYF).

Belongs to the glycosyltransferase 87 family.

The protein localises to the cell membrane. It catalyses the reaction Adds an alpha-D-arabinofuranosyl group from trans,octacis-decaprenylphospho-beta-D-arabinofuranose at the 3-O-position of an alpha-(1-&gt;5)-arabinofuranan chain attached to a beta-(1-&gt;5)-galactofuranan chain.. It participates in cell wall biogenesis; cell wall polysaccharide biosynthesis. Involved in the biosynthesis of the arabinogalactan (AG) region of the mycolylarabinogalactan-peptidoglycan (mAGP) complex, an essential component of the mycobacterial cell wall. Catalyzes the addition of an arabinofuranosyl (Araf) residue from the sugar donor beta-D-arabinofuranosyl-1-monophosphoryldecaprenol (DPA) on the C-3 of an alpha-(1-&gt;5)-linked Araf from the arabinan backbone of AG. This Mycolicibacterium smegmatis (strain ATCC 700084 / mc(2)155) (Mycobacterium smegmatis) protein is Alpha-(1-&gt;3)-arabinofuranosyltransferase (aftC).